We begin with the raw amino-acid sequence, 609 residues long: mRNA cap guanine-N(7) methyltransferase (609 aa).

Basic and acidic residues predominate over residues 1–10; the sequence is MASKEEERTG. Residues 1–252 form a disordered region; the sequence is MASKEEERTG…EEDAMRNSQS (252 aa). Composition is skewed to low complexity over residues 28 to 47 and 70 to 87; these read QPVV…ATPT and PQTT…QQKQ. The segment covering 148–163 has biased composition (basic and acidic residues); the sequence is ANDRPISKRKRLEERH. The segment covering 193 to 205 has biased composition (pro residues); sequence PRSPSPPLPPRSP. The segment covering 233-247 has biased composition (basic and acidic residues); the sequence is RRQEERERALEEDAM. The region spanning 278 to 590 is the mRNA cap 0 methyltransferase domain; the sequence is SKIKGLRSFN…KYTPLGFTSA (313 aa). 287–288 is an mRNA binding site; it reads NN. S-adenosyl-L-methionine is bound by residues K291, G314, D338, D379, 422 to 424, and Y427; that span reads MFA.

Belongs to the class I-like SAM-binding methyltransferase superfamily. mRNA cap 0 methyltransferase family.

The protein localises to the nucleus. The enzyme catalyses a 5'-end (5'-triphosphoguanosine)-ribonucleoside in mRNA + S-adenosyl-L-methionine = a 5'-end (N(7)-methyl 5'-triphosphoguanosine)-ribonucleoside in mRNA + S-adenosyl-L-homocysteine. Functionally, responsible for methylating the 5'-cap structure of mRNAs. The sequence is that of mRNA cap guanine-N(7) methyltransferase (abd1) from Aspergillus niger (strain ATCC MYA-4892 / CBS 513.88 / FGSC A1513).